The primary structure comprises 957 residues: Dystrophin-related protein 2 (957 aa).

Spectrin repeat units follow at residues 102 to 179 (DHSG…EELE) and 231 to 337 (EHLL…QLQD). Positions 358–383 (WERAISPNKVPYYINHQAQTTCWDHP) constitute a WW domain. A ZZ-type; degenerate zinc finger spans residues 605-661 (KHQTKCSICRQCPIKGFRYRSLKQFNVDICQTCFLTGKASKGNKLHYPIMEYYTPTT). Positions 610, 613, 634, and 637 each coordinate Zn(2+). Ser-748 is subject to Phosphoserine. Residues 877-894 (PPTESDGNGSAGSSLASS) show a composition bias toward low complexity. The interval 877–923 (PPTESDGNGSAGSSLASSPRQSEGSHPREKGQTTPDTEAADDVGSKS) is disordered. Thr-910 carries the phosphothreonine modification.

Interacts with PRX; this enhances phosphorylation. Identified in a dystroglycan complex that contains at least PRX, DRP2, UTRN, DMD and DAG1. Detected in trigeminal nerve Schwann cells. Detected in brain cortex and hippocampus. Detected in brain membrane fractions and highly enriched in the postsynaptic density (at protein level).

It is found in the postsynaptic density. Its subcellular location is the cell projection. It localises to the dendrite. The protein resides in the perikaryon. The protein localises to the cell membrane. In terms of biological role, required for normal myelination and for normal organization of the cytoplasm and the formation of Cajal bands in myelinating Schwann cells. Required for normal PRX location at appositions between the abaxonal surface of the myelin sheath and the Schwann cell plasma membrane. Possibly involved in membrane-cytoskeleton interactions of the central nervous system. This chain is Dystrophin-related protein 2 (Drp2), found in Rattus norvegicus (Rat).